The chain runs to 335 residues: GTPase Obg (335 aa).

The Obg domain occupies methionine 1–isoleucine 158. Positions alanine 159–serine 334 constitute an OBG-type G domain. Residues glycine 165 to serine 172, phenylalanine 190 to histidine 194, aspartate 215 to glycine 218, asparagine 285 to aspartate 288, and serine 315 to leucine 317 contribute to the GTP site. Mg(2+)-binding residues include serine 172 and threonine 192.

This sequence belongs to the TRAFAC class OBG-HflX-like GTPase superfamily. OBG GTPase family. In terms of assembly, monomer. The cofactor is Mg(2+).

The protein localises to the cytoplasm. Its function is as follows. An essential GTPase which binds GTP, GDP and possibly (p)ppGpp with moderate affinity, with high nucleotide exchange rates and a fairly low GTP hydrolysis rate. Plays a role in control of the cell cycle, stress response, ribosome biogenesis and in those bacteria that undergo differentiation, in morphogenesis control. The chain is GTPase Obg from Chlamydia muridarum (strain MoPn / Nigg).